Consider the following 232-residue polypeptide: Probable phospholipid hydroperoxide glutathione peroxidase 6, mitochondrial (232 aa).

A mitochondrion-targeting transit peptide spans Met-1 to Gly-54. Cys-105 is a catalytic residue.

It belongs to the glutathione peroxidase family. As to expression, expressed at a low but detectable level in leaves, stems, and flowers, but at a higher level in siliques and even higher in roots. Predominantly expressed in seeds.

It localises to the mitochondrion. It carries out the reaction a hydroperoxy polyunsaturated fatty acid + 2 glutathione = a hydroxy polyunsaturated fatty acid + glutathione disulfide + H2O. Protects cells and enzymes from oxidative damage, by catalyzing the reduction of hydrogen peroxide, lipid peroxides and organic hydroperoxide, by glutathione. This chain is Probable phospholipid hydroperoxide glutathione peroxidase 6, mitochondrial (GPX6), found in Arabidopsis thaliana (Mouse-ear cress).